The primary structure comprises 343 residues: L-idonate 5-dehydrogenase (NAD(P)(+)) (343 aa).

Residues cysteine 40, histidine 65, cysteine 93, cysteine 96, cysteine 99, cysteine 107, and glutamate 153 each contribute to the Zn(2+) site.

The protein belongs to the zinc-containing alcohol dehydrogenase family. Zn(2+) serves as cofactor.

It catalyses the reaction L-idonate + NADP(+) = 5-dehydro-D-gluconate + NADPH + H(+). It carries out the reaction L-idonate + NAD(+) = 5-dehydro-D-gluconate + NADH + H(+). It participates in carbohydrate acid metabolism; L-idonate degradation. Functionally, catalyzes the NADH/NADPH-dependent oxidation of L-idonate to 5-ketogluconate (5KG). In Escherichia coli (strain K12), this protein is L-idonate 5-dehydrogenase (NAD(P)(+)) (idnD).